We begin with the raw amino-acid sequence, 396 residues long: 1-deoxy-D-xylulose 5-phosphate reductoisomerase (396 aa).

NADPH is bound by residues Thr-17, Gly-18, Ser-19, Ile-20, Asn-47, and Asn-130. 1-deoxy-D-xylulose 5-phosphate is bound at residue Lys-131. Glu-132 contributes to the NADPH binding site. A Mn(2+)-binding site is contributed by Asp-156. The 1-deoxy-D-xylulose 5-phosphate site is built by Ser-157, Glu-158, Ser-182, and His-205. Position 158 (Glu-158) interacts with Mn(2+). Gly-211 is an NADPH binding site. Residues Ser-218, Asn-223, Lys-224, and Glu-227 each coordinate 1-deoxy-D-xylulose 5-phosphate. Glu-227 serves as a coordination point for Mn(2+).

The protein belongs to the DXR family. The cofactor is Mg(2+). Requires Mn(2+) as cofactor.

It catalyses the reaction 2-C-methyl-D-erythritol 4-phosphate + NADP(+) = 1-deoxy-D-xylulose 5-phosphate + NADPH + H(+). It participates in isoprenoid biosynthesis; isopentenyl diphosphate biosynthesis via DXP pathway; isopentenyl diphosphate from 1-deoxy-D-xylulose 5-phosphate: step 1/6. Its function is as follows. Catalyzes the NADPH-dependent rearrangement and reduction of 1-deoxy-D-xylulose-5-phosphate (DXP) to 2-C-methyl-D-erythritol 4-phosphate (MEP). This chain is 1-deoxy-D-xylulose 5-phosphate reductoisomerase, found in Rhizobium etli (strain ATCC 51251 / DSM 11541 / JCM 21823 / NBRC 15573 / CFN 42).